Here is a 204-residue protein sequence, read N- to C-terminus: DNA-binding transcriptional activator EvgA (204 aa).

The Response regulatory domain occupies 2–117 (NAIIIDDHPL…NIIAAIEAAK (116 aa)). The residue at position 52 (Asp52) is a 4-aspartylphosphate. Residues 137–202 (DQQKLDSLSK…DLYTFAQRNK (66 aa)) enclose the HTH luxR-type domain. Positions 161 to 180 (NNDIAEKMFISNKTVSTYKS) form a DNA-binding region, H-T-H motif.

Homodimer. Post-translationally, phosphorylated by EvgS.

The protein localises to the cytoplasm. Member of the two-component regulatory system EvgS/EvgA. Regulates the expression of emrKY operon and yfdX. Also seems to control expression of at least one other multidrug efflux operon. The polypeptide is DNA-binding transcriptional activator EvgA (evgA) (Escherichia coli O157:H7).